Consider the following 427-residue polypeptide: Proline--tRNA ligase (427 aa).

This sequence belongs to the class-II aminoacyl-tRNA synthetase family. ProS type 2 subfamily. As to quaternary structure, homodimer.

The protein localises to the cytoplasm. It catalyses the reaction tRNA(Pro) + L-proline + ATP = L-prolyl-tRNA(Pro) + AMP + diphosphate. Catalyzes the attachment of proline to tRNA(Pro) in a two-step reaction: proline is first activated by ATP to form Pro-AMP and then transferred to the acceptor end of tRNA(Pro). This is Proline--tRNA ligase from Rickettsia akari (strain Hartford).